The sequence spans 375 residues: Succinyl-diaminopimelate desuccinylase (375 aa).

A Zn(2+)-binding site is contributed by His-66. Residue Asp-68 is part of the active site. Asp-99 lines the Zn(2+) pocket. The Proton acceptor role is filled by Glu-133. Zn(2+) is bound by residues Glu-134, Glu-162, and His-348.

Belongs to the peptidase M20A family. DapE subfamily. In terms of assembly, homodimer. It depends on Zn(2+) as a cofactor. The cofactor is Co(2+).

It carries out the reaction N-succinyl-(2S,6S)-2,6-diaminopimelate + H2O = (2S,6S)-2,6-diaminopimelate + succinate. It participates in amino-acid biosynthesis; L-lysine biosynthesis via DAP pathway; LL-2,6-diaminopimelate from (S)-tetrahydrodipicolinate (succinylase route): step 3/3. Its function is as follows. Catalyzes the hydrolysis of N-succinyl-L,L-diaminopimelic acid (SDAP), forming succinate and LL-2,6-diaminopimelate (DAP), an intermediate involved in the bacterial biosynthesis of lysine and meso-diaminopimelic acid, an essential component of bacterial cell walls. This Herminiimonas arsenicoxydans protein is Succinyl-diaminopimelate desuccinylase.